The following is a 256-amino-acid chain: tRNA (guanine-N(7)-)-methyltransferase (256 aa).

Positions 1-11 (MHPQDASTEQT) are enriched in polar residues. The tract at residues 1 to 35 (MHPQDASTEQTPVDDDQVESSQPVHAPEDVAHPRR) is disordered. S-adenosyl-L-methionine-binding residues include Glu-85, Glu-110, Asp-137, and Asp-160. Asp-160 is an active-site residue. Residue Lys-164 coordinates substrate. The interval 166-171 (RHNKRR) is interaction with RNA. Substrate contacts are provided by residues Asp-196 and 234–237 (TKFE).

It belongs to the class I-like SAM-binding methyltransferase superfamily. TrmB family.

The catalysed reaction is guanosine(46) in tRNA + S-adenosyl-L-methionine = N(7)-methylguanosine(46) in tRNA + S-adenosyl-L-homocysteine. It functions in the pathway tRNA modification; N(7)-methylguanine-tRNA biosynthesis. Its function is as follows. Catalyzes the formation of N(7)-methylguanine at position 46 (m7G46) in tRNA. The polypeptide is tRNA (guanine-N(7)-)-methyltransferase (Cupriavidus pinatubonensis (strain JMP 134 / LMG 1197) (Cupriavidus necator (strain JMP 134))).